The sequence spans 207 residues: NAD(P)H dehydrogenase (quinone) (207 aa).

Positions 3–194 constitute a Flavodoxin-like domain; sequence VQIIFYSMYG…EMAKFQGRHV (192 aa). Residues 9 to 14 and 82 to 84 contribute to the FMN site; these read SMYGHI and TRF. Tyrosine 11 provides a ligand contact to NAD(+). Residue tryptophan 102 participates in substrate binding. FMN is bound by residues 117 to 123 and histidine 138; that span reads STATQHG.

Belongs to the WrbA family. FMN is required as a cofactor.

It carries out the reaction a quinone + NADH + H(+) = a quinol + NAD(+). It catalyses the reaction a quinone + NADPH + H(+) = a quinol + NADP(+). In Aromatoleum aromaticum (strain DSM 19018 / LMG 30748 / EbN1) (Azoarcus sp. (strain EbN1)), this protein is NAD(P)H dehydrogenase (quinone).